The chain runs to 911 residues: Protein translocase subunit SecA (911 aa).

ATP contacts are provided by residues glutamine 87, 105 to 109 (GEGKT), and aspartate 513. The interval 853–911 (IQLQHEQVSGLEPEAGEAPSAGEPRSEQPYVRAGRKVGRNDPCPCGSGKKFKACHGKLG) is disordered. Positions 862-875 (GLEPEAGEAPSAGE) are enriched in low complexity. The Zn(2+) site is built by cysteine 895, cysteine 897, cysteine 906, and histidine 907. Residues 901 to 911 (KKFKACHGKLG) are compositionally biased toward basic residues.

It belongs to the SecA family. As to quaternary structure, monomer and homodimer. Part of the essential Sec protein translocation apparatus which comprises SecA, SecYEG and auxiliary proteins SecDF-YajC and YidC. Requires Zn(2+) as cofactor.

Its subcellular location is the cell inner membrane. It is found in the cytoplasm. It carries out the reaction ATP + H2O + cellular proteinSide 1 = ADP + phosphate + cellular proteinSide 2.. Part of the Sec protein translocase complex. Interacts with the SecYEG preprotein conducting channel. Has a central role in coupling the hydrolysis of ATP to the transfer of proteins into and across the cell membrane, serving both as a receptor for the preprotein-SecB complex and as an ATP-driven molecular motor driving the stepwise translocation of polypeptide chains across the membrane. This chain is Protein translocase subunit SecA, found in Teredinibacter turnerae (strain ATCC 39867 / T7901).